The following is a 235-amino-acid chain: uncharacterized protein (235 aa).

This sequence to E.coli YbeU.

This is an uncharacterized protein from Escherichia coli (strain K12).